The following is a 168-amino-acid chain: Cofilin-1-A (168 aa).

An N-acetylalanine modification is found at A2. Residues 4-153 (GVMVSDDVIK…NDPCNLADKL (150 aa)) form the ADF-H domain. A Nuclear localization signal motif is present at residues 30–34 (KKRKK).

Belongs to the actin-binding proteins ADF family. Inactive when phosphorylated. Phosphorylation levels vary during development. Oocytes contain only the phosphorylated form, and 80-95% of cfl1 protein is phosphorylated in unfertilized eggs. Rapid dephosphorylation occurs within 30 minutes after fertilization. Phosphorylation levels increase again between the morula and blastula stages (5-8 hpf) and then decrease again as gastrulation approaches. Dephosphorylated by pdxp. As to expression, expressed diffusely in both animal and vegetal hemispheres of the oocyte. During cleavage, expression accumulates around the cleavage furrow, along the vegetal membrane, and later in the midbody. Strongly expressed in the animal hemisphere during blastula stages, with most cells showing expression by gastrulation. By stage 17, expression is highest in cells of the developing neuroectoderm, and at stage 24 the notochord, neural tube, neural crest, somites and some cells of the archenteron show high expression. By stage 35, expression has declined in the notochord, but remains in the neural tube, epidermis and a layer of cells in the archenteron. Also highly expressed in the retina and neuronal cell bodies at the base of the cement gland but not the cement gland itself. At stage 38, expression is widespread, being highest in the nervous system and retina. In the adult, expression is high in the brain, heart, oocyte, stomach, and low in skeletal muscle.

It is found in the nucleus matrix. Its subcellular location is the cytoplasm. The protein resides in the cytoskeleton. The protein localises to the cell cortex. It localises to the membrane. Its function is as follows. May play a role in the regulation of cell morphology and cytoskeletal organization. Binds to F-actin and exhibits pH-sensitive F-actin depolymerizing activity. Required for formation of the cleavage furrow during cytokinesis. This Xenopus laevis (African clawed frog) protein is Cofilin-1-A (cfl1-a).